The following is a 442-amino-acid chain: Thymidine phosphorylase (442 aa).

It belongs to the thymidine/pyrimidine-nucleoside phosphorylase family. In terms of assembly, homodimer.

It catalyses the reaction thymidine + phosphate = 2-deoxy-alpha-D-ribose 1-phosphate + thymine. The protein operates within pyrimidine metabolism; dTMP biosynthesis via salvage pathway; dTMP from thymine: step 1/2. In terms of biological role, the enzymes which catalyze the reversible phosphorolysis of pyrimidine nucleosides are involved in the degradation of these compounds and in their utilization as carbon and energy sources, or in the rescue of pyrimidine bases for nucleotide synthesis. In Vibrio parahaemolyticus serotype O3:K6 (strain RIMD 2210633), this protein is Thymidine phosphorylase.